Reading from the N-terminus, the 974-residue chain is Glycine dehydrogenase (decarboxylating) (974 aa).

Lys720 carries the post-translational modification N6-(pyridoxal phosphate)lysine.

The protein belongs to the GcvP family. As to quaternary structure, the glycine cleavage system is composed of four proteins: P, T, L and H. It depends on pyridoxal 5'-phosphate as a cofactor.

It carries out the reaction N(6)-[(R)-lipoyl]-L-lysyl-[glycine-cleavage complex H protein] + glycine + H(+) = N(6)-[(R)-S(8)-aminomethyldihydrolipoyl]-L-lysyl-[glycine-cleavage complex H protein] + CO2. Functionally, the glycine cleavage system catalyzes the degradation of glycine. The P protein binds the alpha-amino group of glycine through its pyridoxal phosphate cofactor; CO(2) is released and the remaining methylamine moiety is then transferred to the lipoamide cofactor of the H protein. The chain is Glycine dehydrogenase (decarboxylating) from Cupriavidus metallidurans (strain ATCC 43123 / DSM 2839 / NBRC 102507 / CH34) (Ralstonia metallidurans).